The primary structure comprises 145 residues: D-aminoacyl-tRNA deacylase (145 aa).

The Gly-cisPro motif, important for rejection of L-amino acids signature appears at 137–138; that stretch reads GP.

This sequence belongs to the DTD family. In terms of assembly, homodimer.

It localises to the cytoplasm. The enzyme catalyses glycyl-tRNA(Ala) + H2O = tRNA(Ala) + glycine + H(+). It catalyses the reaction a D-aminoacyl-tRNA + H2O = a tRNA + a D-alpha-amino acid + H(+). In terms of biological role, an aminoacyl-tRNA editing enzyme that deacylates mischarged D-aminoacyl-tRNAs. Also deacylates mischarged glycyl-tRNA(Ala), protecting cells against glycine mischarging by AlaRS. Acts via tRNA-based rather than protein-based catalysis; rejects L-amino acids rather than detecting D-amino acids in the active site. By recycling D-aminoacyl-tRNA to D-amino acids and free tRNA molecules, this enzyme counteracts the toxicity associated with the formation of D-aminoacyl-tRNA entities in vivo and helps enforce protein L-homochirality. The protein is D-aminoacyl-tRNA deacylase of Pseudomonas syringae pv. syringae (strain B728a).